Here is a 247-residue protein sequence, read N- to C-terminus: 3-deoxy-manno-octulosonate cytidylyltransferase (247 aa).

Belongs to the KdsB family.

It localises to the cytoplasm. The catalysed reaction is 3-deoxy-alpha-D-manno-oct-2-ulosonate + CTP = CMP-3-deoxy-beta-D-manno-octulosonate + diphosphate. Its pathway is nucleotide-sugar biosynthesis; CMP-3-deoxy-D-manno-octulosonate biosynthesis; CMP-3-deoxy-D-manno-octulosonate from 3-deoxy-D-manno-octulosonate and CTP: step 1/1. The protein operates within bacterial outer membrane biogenesis; lipopolysaccharide biosynthesis. Activates KDO (a required 8-carbon sugar) for incorporation into bacterial lipopolysaccharide in Gram-negative bacteria. In Leptospira interrogans serogroup Icterohaemorrhagiae serovar Lai (strain 56601), this protein is 3-deoxy-manno-octulosonate cytidylyltransferase.